Here is a 459-residue protein sequence, read N- to C-terminus: Glycosyl hydrolase family 109 protein (459 aa).

The segment at residues 1 to 31 (MHNIHRRNFLKAAGAATAGLVTANIALNAYA) is a signal peptide (tat-type signal). Residues 64–65 (ER), Asp-86, 135–138 (WEWH), 155–156 (EV), and Asn-184 contribute to the NAD(+) site. Residues Tyr-213, Arg-232, 244–247 (YPTH), and Tyr-326 contribute to the substrate site. Residue Tyr-244 participates in NAD(+) binding.

This sequence belongs to the Gfo/Idh/MocA family. Glycosyl hydrolase 109 subfamily. Requires NAD(+) as cofactor. Post-translationally, predicted to be exported by the Tat system. The position of the signal peptide cleavage has not been experimentally proven.

Functionally, glycosidase. The chain is Glycosyl hydrolase family 109 protein from Shewanella baltica (strain OS195).